The sequence spans 867 residues: cGMP-dependent 3',5'-cGMP phosphodiesterase A (867 aa).

Positions 121–146 are enriched in low complexity; it reads IINSSSSTTDTSKTSPIKKQTSSSSP. Disordered stretches follow at residues 121 to 167 and 180 to 241; these read IINS…SQQQ and HHHH…STFP. A compositionally biased stretch (pro residues) spans 147–160; that stretch reads PLSPQQQQPPPPLV. The span at 191–220 shows a compositional bias: low complexity; that stretch reads NDNNNNTTTNNNNIEILEQQQQQQQQQQQQ. Residues 221-232 show a composition bias toward acidic residues; it reads QDEDSTDVDEEF. The phosphodiesterase activity stretch occupies residues 357-503; that stretch reads STTGFVLWIN…GDTCYDPNRI (147 aa). Positions 399, 401, and 403 each coordinate a divalent metal cation. Residues 607–721 and 734–851 each bind a nucleoside 3',5'-cyclic phosphate; these read IFRS…WEMR and VFSR…IFVD.

The protein belongs to the metallo-beta-lactamase superfamily. cNMP phosphodiesterase family. Mn(2+) serves as cofactor. Requires Mg(2+) as cofactor. The cofactor is Zn(2+).

The protein localises to the cytoplasm. The protein resides in the cytosol. It carries out the reaction 3',5'-cyclic GMP + H2O = GMP + H(+). In terms of biological role, phosphodiesterase specific for cGMP, which is activated by cGMP but not by cAMP. Involved in the degradation of intracellular cGMP, contributes to the control of cGMP signals. The polypeptide is cGMP-dependent 3',5'-cGMP phosphodiesterase A (pdeD) (Dictyostelium discoideum (Social amoeba)).